The sequence spans 636 residues: DNA ligase (636 aa).

Lys-113 acts as the N6-AMP-lysine intermediate in catalysis. The region spanning 560–636 (NSEGIFQNQT…KSSFSKKFEK (77 aa)) is the BRCT domain.

It belongs to the NAD-dependent DNA ligase family.

The catalysed reaction is NAD(+) + (deoxyribonucleotide)n-3'-hydroxyl + 5'-phospho-(deoxyribonucleotide)m = (deoxyribonucleotide)n+m + AMP + beta-nicotinamide D-nucleotide.. Catalyzes the formation of phosphodiester linkages between 5'-phosphoryl and 3'-hydroxyl groups in double-stranded DNA using NAD as a coenzyme and as the energy source for the reaction. The sequence is that of DNA ligase from Acanthamoeba polyphaga (Amoeba).